Consider the following 293-residue polypeptide: tRNA pseudouridine synthase B (293 aa).

Asp-39 serves as the catalytic Nucleophile.

This sequence belongs to the pseudouridine synthase TruB family. Type 1 subfamily.

The enzyme catalyses uridine(55) in tRNA = pseudouridine(55) in tRNA. Its function is as follows. Responsible for synthesis of pseudouridine from uracil-55 in the psi GC loop of transfer RNAs. This Streptococcus mutans serotype c (strain ATCC 700610 / UA159) protein is tRNA pseudouridine synthase B.